We begin with the raw amino-acid sequence, 419 residues long: Gustatory receptor for sugar taste 64c (419 aa).

At 1–15 the chain is on the cytoplasmic side; it reads MQQSGQKGTRNTLQH. A helical transmembrane segment spans residues 16–36; that stretch reads AIGPVLVIAQFFGVLPVAGVW. Residues 37–48 lie on the Extracellular side of the membrane; sequence PSCRPERVRFRW. Residues 49-69 form a helical membrane-spanning segment; the sequence is ISLSLLAALILFVFSIVDCAL. Residues 70 to 82 are Cytoplasmic-facing; that stretch reads SSKVVFDHGLKIY. The chain crosses the membrane as a helical span at residues 83 to 103; that stretch reads TIGSLSFSVICIFCFGVFLLL. Over 104–139 the chain is Extracellular; the sequence is SRRWPYIIRRTAECEQIFLEPEYDCSYGRGYSSRLR. Residues 140–160 form a helical membrane-spanning segment; that stretch reads LWGVCMLVAALCEHSTYVGSA. Topologically, residues 161-204 are cytoplasmic; it reads LYNNHLAIVECKLDANFWQNYFQRERQQLFLIMHFTAWWIPFIE. The chain crosses the membrane as a helical span at residues 205–225; that stretch reads WTTLSMTFVWNFVDIFLILIC. The Extracellular portion of the chain corresponds to 226–305; that stretch reads RGMQMRFQQM…FQSKGNYADE (80 aa). Residues 306 to 326 traverse the membrane as a helical segment; that stretch reads LYFWFCLSYVIIRVLNMMFAA. Topologically, residues 327–377 are cytoplasmic; that stretch reads SSIPQEAKEISYTLYEIPTEFWCVELRRLNEIFLSDHFALSGKGYFLLTRR. The helical transmembrane segment at 378-398 threads the bilayer; sequence LIFAMAATLMVYELVLINQMA. The Extracellular portion of the chain corresponds to 399–419; it reads GSEVQKSFCEGGVGSSKSIFS.

It belongs to the insect chemoreceptor superfamily. Gustatory receptor (GR) family. Gr5a subfamily. In terms of tissue distribution, expressed in Gr5a-expressing sugar-sensing cells.

It localises to the cell membrane. Its function is as follows. One of the few identified sugar gustatory receptors identified so far and which promotes the starvation-induced increase of feeding motivation. The chain is Gustatory receptor for sugar taste 64c (Gr64c) from Drosophila melanogaster (Fruit fly).